The chain runs to 342 residues: Signal-regulatory protein beta-2 (342 aa).

Positions 1 to 32 (MCSTMSAPTCLAHLPPCFLLLALVLVPSDASG) are cleaved as a signal peptide. Ig-like V-type domains follow at residues 33-143 (QSSR…KSDE) and 157-258 (PDLW…SGQG). Residues 33 to 287 (QSSRNDWQVL…EPATEMSPTG (255 aa)) lie on the Extracellular side of the membrane. Residues cysteine 60 and cysteine 127 are joined by a disulfide bond. Residues asparagine 116, asparagine 179, and asparagine 231 are each glycosylated (N-linked (GlcNAc...) asparagine). Cysteine 180 and cysteine 242 are disulfide-bonded. Residues 288–308 (LLVVFAPVVLGLKAITLAALL) traverse the membrane as a helical segment. Residues 309 to 342 (LALATSRRSPGQEDVKTTGPAGAMNTLAWSKGQE) lie on the Cytoplasmic side of the membrane. The segment at 317–342 (SPGQEDVKTTGPAGAMNTLAWSKGQE) is disordered.

The protein resides in the membrane. This is Signal-regulatory protein beta-2 (SIRPB2) from Homo sapiens (Human).